A 78-amino-acid polypeptide reads, in one-letter code: Large ribosomal subunit protein bL28 (78 aa).

This sequence belongs to the bacterial ribosomal protein bL28 family.

The protein is Large ribosomal subunit protein bL28 of Leifsonia xyli subsp. xyli (strain CTCB07).